A 463-amino-acid chain; its full sequence is Retinoic acid receptor RXR-gamma (463 aa).

The interval 1–138 (MYGNYSHFMK…TSPGSLVKHI (138 aa)) is modulating. Residues 16–53 (GGSPGHTGSTSMSPSVALPTGKPMDSHPSYTDTPVSAP) form a disordered region. NR C4-type zinc fingers lie at residues 139–159 (CAIC…CEGC) and 175–199 (CRDN…YQKC). A DNA-binding region (nuclear receptor) is located at residues 139–204 (CAICGDRSSG…RYQKCLVMGM (66 aa)). The interval 205–230 (KREAVQEERQRSRERAESEAECASTG) is hinge. The 229-residue stretch at 231–459 (HEDMPVERIL…TFLMEMLETP (229 aa)) folds into the NR LBD domain.

It belongs to the nuclear hormone receptor family. NR2 subfamily. As to quaternary structure, homodimer. Heterodimer with a RAR molecule. Binds DNA preferentially as a RAR/RXR heterodimer. Interacts with RARA. Acetylated by EP300. As to expression, expressed in the liver, but not detected in the adrenal gland (at protein level). Restricted expression in adrenal gland, kidney, liver, brain and lungs. Strong expression in heart and muscles.

The protein localises to the nucleus. Its subcellular location is the cytoplasm. Its function is as follows. Receptor for retinoic acid. Retinoic acid receptors bind as heterodimers to their target response elements in response to their ligands, all-trans or 9-cis retinoic acid, and regulate gene expression in various biological processes. The RAR/RXR heterodimers bind to the retinoic acid response elements (RARE) composed of tandem 5'-AGGTCA-3' sites known as DR1-DR5. The high affinity ligand for RXRs is 9-cis retinoic acid. The polypeptide is Retinoic acid receptor RXR-gamma (Rxrg) (Rattus norvegicus (Rat)).